The sequence spans 1159 residues: RNA-directed RNA polymerase (1159 aa).

Residues 545–727 (LTYGVLAEDT…KALASYTGLE (183 aa)) enclose the RdRp catalytic domain.

The protein belongs to the reoviridae RNA-directed RNA polymerase family. In terms of assembly, interacts with VP3 (Potential). Interacts with VP2 (Potential). Interacts with NSP5; this interaction is probably necessary for the formation of functional virus factories.

It is found in the virion. It carries out the reaction RNA(n) + a ribonucleoside 5'-triphosphate = RNA(n+1) + diphosphate. Functionally, RNA-directed RNA polymerase that is involved in both transcription and genome replication. Together with VP3 capping enzyme, forms an enzyme complex positioned near the channels situated at each of the five-fold vertices of the core. Following infection, the outermost layer of the virus is lost, leaving a double-layered particle (DLP) made up of the core and VP6 shell. VP1 then catalyzes the transcription of fully conservative plus-strand genomic RNAs that are extruded through the DLP's channels into the cytoplasm where they function as mRNAs for translation of viral proteins. One copy of each of the viral (+)RNAs is also recruited during core assembly, together with newly synthesized polymerase complexes and VP2. The polymerase of these novo-formed particles catalyzes the synthesis of complementary minus-strands leading to dsDNA formation. To do so, the polymerase specifically recognizes conserved 3' sequence(s) in plus-strand RNA templates. Once dsRNA synthesis is complete, the polymerase switches to the transcriptional mode, thus providing secondary transcription. The chain is RNA-directed RNA polymerase from Homo sapiens (Human).